Reading from the N-terminus, the 451-residue chain is REST corepressor 3 (451 aa).

Residues 1-55 (MPGMMEKGPELLGKSRSANGGAKSPAGGGGSSANGGLHFSEPESGCSSDDEHGDV) are disordered. The ELM2 domain maps to 55 to 139 (VGMRVGAEYQ…KSLADLPNFT (85 aa)). Lys76 participates in a covalent cross-link: Glycyl lysine isopeptide (Lys-Gly) (interchain with G-Cter in SUMO2). Positions 140–191 (PFPDEWTVEDKVLFEQAFSFHGKSFHRIQQMLPDKTIASLVKYYYSWKKTRS) constitute an SANT domain. Residues 204–275 (ANRHNQGDSD…SQRSKCRPPK (72 aa)) form a disordered region. Phosphoserine is present on residues Ser212 and Ser227. The span at 218 to 240 (EAHPMDGNDSDYDPKKEAKREGN) shows a compositional bias: basic and acidic residues. Residue Lys249 forms a Glycyl lysine isopeptide (Lys-Gly) (interchain with G-Cter in SUMO2) linkage. The segment covering 261–273 (QHRHHSQRSKCRP) has biased composition (basic residues). The stretch at 293–329 (AANTILRQLDMELISLKRQVQNAKQVNSALKQKMEGG) forms a coiled coil. The tract at residues 333–451 (FKPPEAQTPQ…IQTDSQPSLH (119 aa)) is disordered. Positions 349 to 361 (PSPPAPSSTPTPT) are enriched in pro residues. Residues 375–384 (RPTLPAAPAL) show a composition bias toward low complexity. Residues Arg401 and Arg413 each carry the asymmetric dimethylarginine modification. Positions 431–451 (VGGQQPPSLIGIQTDSQPSLH) are enriched in polar residues.

It belongs to the CoREST family.

The protein localises to the nucleus. May act as a component of a corepressor complex that represses transcription. The chain is REST corepressor 3 (Rcor3) from Mus musculus (Mouse).